The chain runs to 160 residues: MTKKKAHKPGSATIAMNRRARHEYFIEEEFEAGLSLQGWEVKSLRAGKANISDSYVLLKDGDAYLFGATITPLNVASSHVVCDPMRSRKLLLNQRELDSLYGRVNREGYTVVALSLYWKNAWCKVRIGVAKGKKAHDKRSDIKEREWKLDKARIMKNAGR.

It belongs to the SmpB family.

Its subcellular location is the cytoplasm. In terms of biological role, required for rescue of stalled ribosomes mediated by trans-translation. Binds to transfer-messenger RNA (tmRNA), required for stable association of tmRNA with ribosomes. tmRNA and SmpB together mimic tRNA shape, replacing the anticodon stem-loop with SmpB. tmRNA is encoded by the ssrA gene; the 2 termini fold to resemble tRNA(Ala) and it encodes a 'tag peptide', a short internal open reading frame. During trans-translation Ala-aminoacylated tmRNA acts like a tRNA, entering the A-site of stalled ribosomes, displacing the stalled mRNA. The ribosome then switches to translate the ORF on the tmRNA; the nascent peptide is terminated with the 'tag peptide' encoded by the tmRNA and targeted for degradation. The ribosome is freed to recommence translation, which seems to be the essential function of trans-translation. This is SsrA-binding protein from Photorhabdus laumondii subsp. laumondii (strain DSM 15139 / CIP 105565 / TT01) (Photorhabdus luminescens subsp. laumondii).